The sequence spans 435 residues: Histidine--tRNA ligase (435 aa).

Belongs to the class-II aminoacyl-tRNA synthetase family.

It is found in the cytoplasm. The catalysed reaction is tRNA(His) + L-histidine + ATP = L-histidyl-tRNA(His) + AMP + diphosphate + H(+). In Aeropyrum pernix (strain ATCC 700893 / DSM 11879 / JCM 9820 / NBRC 100138 / K1), this protein is Histidine--tRNA ligase (hisS).